We begin with the raw amino-acid sequence, 294 residues long: Tyrosine-protein phosphatase (294 aa).

The N-terminal stretch at 1 to 24 is a signal peptide; that stretch reads MKTHHANLALALMLGLSSSATAVA. Cysteine 182 serves as the catalytic Phosphocysteine intermediate. Composition is skewed to basic and acidic residues over residues 221–231 and 238–247; these read QPKDSDERADH and PGDRPQDGGH. The segment at 221-252 is disordered; the sequence is QPKDSDERADHGAGQAEPGDRPQDGGHGRYRA.

The protein belongs to the protein-tyrosine phosphatase family. Monomer.

It carries out the reaction O-phospho-L-tyrosyl-[protein] + H2O = L-tyrosyl-[protein] + phosphate. The polypeptide is Tyrosine-protein phosphatase (iphP) (Nostoc commune).